The chain runs to 263 residues: Phosphate import ATP-binding protein PstB (263 aa).

In terms of domain architecture, ABC transporter spans 16–258 (VTARNVTVSY…PRDTRTQDYI (243 aa)). Residue 48–55 (GPSGCGKS) coordinates ATP.

Belongs to the ABC transporter superfamily. Phosphate importer (TC 3.A.1.7) family. As to quaternary structure, the complex is composed of two ATP-binding proteins (PstB), two transmembrane proteins (PstC and PstA) and a solute-binding protein (PstS).

Its subcellular location is the cell inner membrane. The enzyme catalyses phosphate(out) + ATP + H2O = ADP + 2 phosphate(in) + H(+). In terms of biological role, part of the ABC transporter complex PstSACB involved in phosphate import. Responsible for energy coupling to the transport system. In Maricaulis maris (strain MCS10) (Caulobacter maris), this protein is Phosphate import ATP-binding protein PstB.